Here is a 160-residue protein sequence, read N- to C-terminus: Large ribosomal subunit protein eL29 (160 aa).

Residues 1-26 (MAKSKNHTTHNQSRKWHRNGIKKPRS) show a composition bias toward basic residues. 2 disordered regions span residues 1 to 34 (MAKS…SLKG) and 115 to 160 (RLCQ…VKAP). Lys-5 carries the post-translational modification N6-methyllysine. Ser-31 is subject to Phosphoserine. The residue at position 33 (Lys-33) is an N6-acetyllysine. Residues 126 to 160 (KAGAKAPAKAQASAPAQAPKGAQAPKGAQAPVKAP) show a composition bias toward low complexity. Tandem repeats lie at residues 127–134 (AGAKAPAK) and 135–142 (AQASAPAQ). The tract at residues 127–142 (AGAKAPAKAQASAPAQ) is 2 X 8 AA tandem repeats of A-X-A-K-A-P-A-[KQ]. Ser-138 carries the phosphoserine modification. Lys-145 is subject to N6-acetyllysine.

The protein belongs to the eukaryotic ribosomal protein eL29 family. As to quaternary structure, component of the large ribosomal subunit.

It is found in the cytoplasm. Component of the large ribosomal subunit. The ribosome is a large ribonucleoprotein complex responsible for the synthesis of proteins in the cell. The protein is Large ribosomal subunit protein eL29 (Rpl29) of Mus musculus (Mouse).